We begin with the raw amino-acid sequence, 644 residues long: DNA gyrase subunit B (644 aa).

The Toprim domain occupies 429 to 543 (CEIFLVEGDS…AGYVYIAQPP (115 aa)). The Mg(2+) site is built by Glu435, Asp508, and Asp510.

The protein belongs to the type II topoisomerase GyrB family. Heterotetramer, composed of two GyrA and two GyrB chains. In the heterotetramer, GyrA contains the active site tyrosine that forms a transient covalent intermediate with DNA, while GyrB binds cofactors and catalyzes ATP hydrolysis. Mg(2+) serves as cofactor. Requires Mn(2+) as cofactor. Ca(2+) is required as a cofactor.

It is found in the cytoplasm. The catalysed reaction is ATP-dependent breakage, passage and rejoining of double-stranded DNA.. Functionally, a type II topoisomerase that negatively supercoils closed circular double-stranded (ds) DNA in an ATP-dependent manner to modulate DNA topology and maintain chromosomes in an underwound state. Negative supercoiling favors strand separation, and DNA replication, transcription, recombination and repair, all of which involve strand separation. Also able to catalyze the interconversion of other topological isomers of dsDNA rings, including catenanes and knotted rings. Type II topoisomerases break and join 2 DNA strands simultaneously in an ATP-dependent manner. The polypeptide is DNA gyrase subunit B (Staphylococcus aureus (strain COL)).